Consider the following 310-residue polypeptide: Peroxidase 44 (310 aa).

The signal sequence occupies residues 1–20; the sequence is MRSITALFFLFCFLAPSALA. Intrachain disulfides connect C31–C110, C64–C69, C116–C305, and C194–C218. H62 functions as the Proton acceptor in the catalytic mechanism. The Ca(2+) site is built by D63, V66, G68, D70, and S72. Substrate is bound at residue P156. H187 provides a ligand contact to heme b. A Ca(2+)-binding site is contributed by S188. Ca(2+)-binding residues include D229, T232, and D237.

The protein belongs to the peroxidase family. Classical plant (class III) peroxidase subfamily. The cofactor is heme b. It depends on Ca(2+) as a cofactor.

It localises to the secreted. It catalyses the reaction 2 a phenolic donor + H2O2 = 2 a phenolic radical donor + 2 H2O. In terms of biological role, removal of H(2)O(2), oxidation of toxic reductants, biosynthesis and degradation of lignin, suberization, auxin catabolism, response to environmental stresses such as wounding, pathogen attack and oxidative stress. These functions might be dependent on each isozyme/isoform in each plant tissue. This chain is Peroxidase 44 (PER44), found in Arabidopsis thaliana (Mouse-ear cress).